A 273-amino-acid polypeptide reads, in one-letter code: LOB domain-containing protein 20 (273 aa).

Basic and acidic residues predominate over residues 1–15 (MADQQRGHNTSDSRR). A disordered region spans residues 1–39 (MADQQRGHNTSDSRRKSLAGKRTSQQTPTSSLSSGGVSM). Positions 23-39 (TSQQTPTSSLSSGGVSM) are enriched in low complexity. An LOB domain is found at 50-152 (SPCGACKFLR…AELSVVQSQL (103 aa)). A disordered region spans residues 221–248 (LEHSLQPMPPHQQRRGDYQHEDEEESGA).

It belongs to the LOB domain-containing protein family. In terms of tissue distribution, expressed in roots and flowers.

This chain is LOB domain-containing protein 20 (LBD20), found in Arabidopsis thaliana (Mouse-ear cress).